Here is a 165-residue protein sequence, read N- to C-terminus: uncharacterized protein (165 aa).

Belongs to the IIV-6 415R family.

This is an uncharacterized protein from Invertebrate iridescent virus 3 (IIV-3).